The sequence spans 157 residues: Nicotinate dehydrogenase small FeS subunit (157 aa).

The 77-residue stretch at 4–80 (ITINLNLNGE…ESTIITLEGV (77 aa)) folds into the 2Fe-2S ferredoxin-type domain. The [2Fe-2S] cluster site is built by C42, C47, C50, C62, C101, C104, C136, and C138.

In terms of assembly, heterooctamer of NDHM, NDHL, NDHS and NDHF. Dimer of heterotetramers. It depends on [2Fe-2S] cluster as a cofactor.

The enzyme catalyses nicotinate + NADP(+) + H2O = 6-hydroxynicotinate + NADPH + H(+). The protein operates within cofactor degradation; nicotinate degradation; 6-hydroxynicotinate from nicotinate: step 1/1. Its activity is regulated as follows. Reversibly inactivated by selenide and sulfide. Not inhibited by cyanide. Catalyzes the hydroxylation of nicotinate to 6-hydroxynicotinate. Also active against 2-pyrazinecarboxylic acid, but inactive against other nicotinate analogs. This chain is Nicotinate dehydrogenase small FeS subunit (ndhS), found in Eubacterium barkeri (Clostridium barkeri).